A 422-amino-acid chain; its full sequence is GTPase Obg (422 aa).

The 158-residue stretch at 1–158 folds into the Obg domain; sequence MFYDRAKIYV…LWLELELKVI (158 aa). An OBG-type G domain is found at 159–330; sequence ADVGLIGFPN…VIHRVAELLA (172 aa). GTP is bound by residues 165-172, 190-194, 212-215, 282-285, and 311-313; these read GFPNAGKS, FTTLV, DIPG, NKMD, and SAA. Mg(2+) is bound by residues serine 172 and threonine 192. One can recognise an OCT domain in the interval 344–422; that stretch reads VMFEPEERFN…IGDWEFEWSE (79 aa).

It belongs to the TRAFAC class OBG-HflX-like GTPase superfamily. OBG GTPase family. In terms of assembly, monomer. Requires Mg(2+) as cofactor.

It localises to the cytoplasm. An essential GTPase which binds GTP, GDP and possibly (p)ppGpp with moderate affinity, with high nucleotide exchange rates and a fairly low GTP hydrolysis rate. Plays a role in control of the cell cycle, stress response, ribosome biogenesis and in those bacteria that undergo differentiation, in morphogenesis control. This is GTPase Obg from Desulforamulus reducens (strain ATCC BAA-1160 / DSM 100696 / MI-1) (Desulfotomaculum reducens).